We begin with the raw amino-acid sequence, 239 residues long: RNA polymerase sigma-E factor (239 aa).

Residues 1 to 29 constitute a propeptide, removed by SpoIIGA; sequence MKKLKLRLTHLWYKLLMKLGLKSDEVYYI. A Polymerase core binding motif is present at residues 86 to 99; that stretch reads DLISIGTIGLIKAV. The H-T-H motif DNA-binding region spans 206-225; that stretch reads QKDVADMMGISQSYISRLEK.

Belongs to the sigma-70 factor family. In terms of processing, proteolytically cleaved in the N-terminus by SpoIIGA to yield the active peptide.

In terms of biological role, sigma factors are initiation factors that promote the attachment of RNA polymerase to specific initiation sites and are then released. This sigma factor is responsible for the expression of sporulation specific genes. The sequence is that of RNA polymerase sigma-E factor (sigE) from Bacillus subtilis (strain 168).